The sequence spans 99 residues: Probable non-specific lipid-transfer protein AKCS9 (99 aa).

The first 33 residues, 1–33, serve as a signal peptide directing secretion; sequence MTMKMKMKMSVVCAVVVVALFLIDVGPVAEAVT. Cystine bridges form between Cys34–Cys68, Cys42–Cys56, Cys57–Cys92, and Cys66–Cys99.

The protein belongs to the plant LTP family. As to expression, expressed in most tissues except nodules.

Functionally, potential lipid transfer protein. This Vigna unguiculata (Cowpea) protein is Probable non-specific lipid-transfer protein AKCS9.